The following is a 342-amino-acid chain: Anthranilate phosphoribosyltransferase (342 aa).

5-phospho-alpha-D-ribose 1-diphosphate-binding positions include G81, 84–85 (GD), T89, 91–94 (NIST), 109–117 (KHGNRALSS), and T121. G81 is an anthranilate binding site. A Mg(2+)-binding site is contributed by S93. N112 contacts anthranilate. An anthranilate-binding site is contributed by R167. 2 residues coordinate Mg(2+): D225 and E226.

This sequence belongs to the anthranilate phosphoribosyltransferase family. As to quaternary structure, homodimer. Mg(2+) serves as cofactor.

It carries out the reaction N-(5-phospho-beta-D-ribosyl)anthranilate + diphosphate = 5-phospho-alpha-D-ribose 1-diphosphate + anthranilate. It participates in amino-acid biosynthesis; L-tryptophan biosynthesis; L-tryptophan from chorismate: step 2/5. Its function is as follows. Catalyzes the transfer of the phosphoribosyl group of 5-phosphorylribose-1-pyrophosphate (PRPP) to anthranilate to yield N-(5'-phosphoribosyl)-anthranilate (PRA). The polypeptide is Anthranilate phosphoribosyltransferase (Agrobacterium fabrum (strain C58 / ATCC 33970) (Agrobacterium tumefaciens (strain C58))).